Reading from the N-terminus, the 713-residue chain is Phosphoribosylformylglycinamidine synthase subunit PurL (713 aa).

The active site involves H32. Y35 lines the ATP pocket. Mg(2+) is bound at residue E76. Residues 77 to 80 (SHNH) and R99 contribute to the substrate site. H78 (proton acceptor) is an active-site residue. D100 lines the Mg(2+) pocket. A substrate-binding site is contributed by Q224. D252 lines the Mg(2+) pocket. 296-298 (ESQ) contributes to the substrate binding site. 2 residues coordinate ATP: D471 and G508. Mg(2+) is bound at residue N509. Residue S511 participates in substrate binding.

The protein belongs to the FGAMS family. Monomer. Part of the FGAM synthase complex composed of 1 PurL, 1 PurQ and 2 PurS subunits.

The protein localises to the cytoplasm. The catalysed reaction is N(2)-formyl-N(1)-(5-phospho-beta-D-ribosyl)glycinamide + L-glutamine + ATP + H2O = 2-formamido-N(1)-(5-O-phospho-beta-D-ribosyl)acetamidine + L-glutamate + ADP + phosphate + H(+). The protein operates within purine metabolism; IMP biosynthesis via de novo pathway; 5-amino-1-(5-phospho-D-ribosyl)imidazole from N(2)-formyl-N(1)-(5-phospho-D-ribosyl)glycinamide: step 1/2. In terms of biological role, part of the phosphoribosylformylglycinamidine synthase complex involved in the purines biosynthetic pathway. Catalyzes the ATP-dependent conversion of formylglycinamide ribonucleotide (FGAR) and glutamine to yield formylglycinamidine ribonucleotide (FGAM) and glutamate. The FGAM synthase complex is composed of three subunits. PurQ produces an ammonia molecule by converting glutamine to glutamate. PurL transfers the ammonia molecule to FGAR to form FGAM in an ATP-dependent manner. PurS interacts with PurQ and PurL and is thought to assist in the transfer of the ammonia molecule from PurQ to PurL. The polypeptide is Phosphoribosylformylglycinamidine synthase subunit PurL (Thermococcus kodakarensis (strain ATCC BAA-918 / JCM 12380 / KOD1) (Pyrococcus kodakaraensis (strain KOD1))).